The chain runs to 414 residues: uncharacterized protein (414 aa).

This is an uncharacterized protein from Rickettsia conorii (strain ATCC VR-613 / Malish 7).